Consider the following 494-residue polypeptide: UPF0371 protein SEQ_1471 (494 aa).

This sequence belongs to the UPF0371 family.

In Streptococcus equi subsp. equi (strain 4047), this protein is UPF0371 protein SEQ_1471.